A 493-amino-acid polypeptide reads, in one-letter code: Poly(ribitol-phosphate) alpha-N-acetylglucosaminyltransferase (493 aa).

UDP-N-acetyl-alpha-D-glucosamine-binding positions include Gly17, Lys59, His249, Arg326, Lys331, Thr383, and 403–411 (EGQGLSMIE).

This sequence belongs to the glycosyltransferase group 1 family. In terms of assembly, homotrimer.

The protein localises to the cytoplasm. It carries out the reaction 4-O-[(D-ribitylphospho)(n)-di{(2R)-glycerylphospho}]-N-acetyl-beta-D-mannosaminyl-(1-&gt;4)-N-acetyl-alpha-D-glucosaminyl di-trans,octa-cis-undecaprenyl diphosphate + n UDP-N-acetyl-alpha-D-glucosamine = 4-O-([2-N-acetyl-alpha-D-glucosaminyl-1-D-ribitylphospho](n)-di{[2R]-1-glycerylphospho})-N-acetyl-beta-D-mannosaminyl-(1-&gt;4)-N-acetyl-alpha-D-glucosaminyl di-trans,octa-cis-undecaprenyl diphosphate + n UDP + n H(+). It participates in cell wall biogenesis; poly(ribitol phosphate) teichoic acid biosynthesis. Its function is as follows. Attaches N-acetyl-alpha-D-glucosamine residues to poly(RboP)-wall teichoic acids (WTAs). The polypeptide is Poly(ribitol-phosphate) alpha-N-acetylglucosaminyltransferase (Staphylococcus aureus (strain COL)).